Consider the following 556-residue polypeptide: PPE family protein PPE2 (556 aa).

The interval 8–164 (ASPPEVHSAL…ASYQAVSTAA (157 aa)) is PPE. An SH3-like region spans residues 201-256 (QKIGYTDFYNNVIQPFINWLTNLPFLQAMFSGFDPWLPSLGNPLTFLSPANIAFAL). Residues 319–340 (LEQTLALLPAALPLLAAPLAPL) are leucine zipper motif. 2 disordered regions span residues 385–418 (TPTP…PPVT) and 443–556 (GTGV…TRVE). The span at 400 to 417 (PTPPPGPPPPPVTAPPPV) shows a compositional bias: pro residues. A compositionally biased stretch (low complexity) spans 456-471 (AEAPAAAAAPEEQVQP). Over residues 472-481 (QRRRRPKIKQ) the composition is skewed to basic residues. The Nuclear localization signal signature appears at 473–481 (RRRRPKIKQ).

It belongs to the mycobacterial PPE family.

Its subcellular location is the secreted. It localises to the host cytoplasm. The protein localises to the host nucleus. Functionally, inhibits nitric oxide (NO) production in activated macrophages. Acts by inhibiting expression of the host inducible nitric oxide synthase (iNOS). PPE2 is translocated into the host macrophage nucleus, where it interacts with a GATA-binding site overlapping with the TATA box of NOS2 (iNOS) promoter, and strongly inhibits NOS2 gene transcription. Reduction in NO production in turn facilitates intracellular survival of the bacilli inside the macrophage. In addition, disrupts the assembly of NADPH oxidase complex, which inhibits NADPH oxidase-mediated reactive oxygen species (ROS) generation in macrophages and favors M.tuberculosis survival. Acts by interacting with NCF2, the cytosolic subunit of NADPH oxidase, and preventing translocation of NCF2 and NCF1 to the membrane, which causes a reduction of the functional assembly of NADPH oxidase complex and a decrease in NADPH oxidase activity. This Mycobacterium tuberculosis (strain ATCC 25618 / H37Rv) protein is PPE family protein PPE2 (PPE2).